The chain runs to 339 residues: N-acetyl-gamma-glutamyl-phosphate reductase (339 aa).

Residue Cys-145 is part of the active site.

The protein belongs to the NAGSA dehydrogenase family. Type 1 subfamily.

It is found in the cytoplasm. It catalyses the reaction N-acetyl-L-glutamate 5-semialdehyde + phosphate + NADP(+) = N-acetyl-L-glutamyl 5-phosphate + NADPH + H(+). It functions in the pathway amino-acid biosynthesis; L-arginine biosynthesis; N(2)-acetyl-L-ornithine from L-glutamate: step 3/4. Its function is as follows. Catalyzes the NADPH-dependent reduction of N-acetyl-5-glutamyl phosphate to yield N-acetyl-L-glutamate 5-semialdehyde. The sequence is that of N-acetyl-gamma-glutamyl-phosphate reductase from Thermotoga maritima (strain ATCC 43589 / DSM 3109 / JCM 10099 / NBRC 100826 / MSB8).